Reading from the N-terminus, the 193-residue chain is Interleukin-18-binding protein (193 aa).

The first 28 residues, 1–28, serve as a signal peptide directing secretion; it reads MTMRHCWTAGPSSWWVLLLYVHVILARA. The 102-residue stretch at 60-161 folds into the Ig-like C2-type domain; the sequence is PALDVIWPEK…QVAQYHIILA (102 aa). Asn74, Asn98, Asn120, and Asn142 each carry an N-linked (GlcNAc...) asparagine glycan. Cys81 and Cys145 are joined by a disulfide. Polar residues predominate over residues 172 to 185; that stretch reads SPSQETLSSHSPVS. Positions 172–193 are disordered; that stretch reads SPSQETLSSHSPVSRSAGPGVA.

Its subcellular location is the secreted. Its function is as follows. Binds to IL-18 and inhibits its activity. Functions as an inhibitor of the early TH1 cytokine response. The protein is Interleukin-18-binding protein (Il18bp) of Mus musculus (Mouse).